We begin with the raw amino-acid sequence, 141 residues long: Cystatin-S (141 aa).

Positions 1-27 are cleaved as a signal peptide; it reads MAYLLHAQLFLLTTFILVLNMRLCPVL. The short motif at 76–80 is the Secondary area of contact element; that stretch reads QVVAG. Intrachain disulfides connect cysteine 94/cysteine 104 and cysteine 118/cysteine 138.

The protein belongs to the cystatin family. As to expression, found in saliva, tears, urine and seminal fluid.

The protein localises to the secreted. Functionally, this protein strongly inhibits papain and ficin, partially inhibits stem bromelain and bovine cathepsin C, but does not inhibit porcine cathepsin B or clostripain. Papain is inhibited non-competitively. In Rattus norvegicus (Rat), this protein is Cystatin-S (Cst4).